The primary structure comprises 592 residues: Aspartate--tRNA ligase (592 aa).

E173 contacts L-aspartate. An aspartate region spans residues 197-200 (QLFK). R219 is an L-aspartate binding site. ATP-binding positions include 219–221 (RDE) and Q228. H448 serves as a coordination point for L-aspartate. Residue E482 coordinates ATP. R489 serves as a coordination point for L-aspartate. 534–537 (GLDR) provides a ligand contact to ATP.

It belongs to the class-II aminoacyl-tRNA synthetase family. Type 1 subfamily. In terms of assembly, homodimer.

Its subcellular location is the cytoplasm. It catalyses the reaction tRNA(Asp) + L-aspartate + ATP = L-aspartyl-tRNA(Asp) + AMP + diphosphate. Catalyzes the attachment of L-aspartate to tRNA(Asp) in a two-step reaction: L-aspartate is first activated by ATP to form Asp-AMP and then transferred to the acceptor end of tRNA(Asp). In Shewanella baltica (strain OS223), this protein is Aspartate--tRNA ligase.